The following is a 1135-amino-acid chain: Receptor-type guanylate cyclase gcy-4 (1135 aa).

A signal peptide spans 1–20; it reads MTQLLRFLLILSIFCDFSHS. Residues 21 to 483 are Extracellular-facing; the sequence is QRPTIRVGIA…CPIPFFDQYR (463 aa). 9 N-linked (GlcNAc...) asparagine glycosylation sites follow: Asn-37, Asn-193, Asn-209, Asn-251, Asn-349, Asn-375, Asn-431, Asn-436, and Asn-447. A helical transmembrane segment spans residues 484–504; it reads LLIFVFVIVAGLLILAIFTCL. At 505–1135 the chain is on the cytoplasmic side; that stretch reads TSMVRNQRAE…VMRREMMRVS (631 aa). Residues 535–560 form a disordered region; the sequence is KGRRLSTDSENSTVTKSSKGSSSKNF. A Protein kinase domain is found at 545–837; sequence NSTVTKSSKG…KDNLMDHVFS (293 aa). Residues 546–560 show a composition bias toward low complexity; sequence STVTKSSKGSSSKNF. One can recognise a Guanylate cyclase domain in the interval 895 to 1025; it reads TVFFSDLVKF…DTVNTASRME (131 aa).

It belongs to the adenylyl cyclase class-4/guanylyl cyclase family. As to expression, expressed bilaterally in ASE neurons.

It is found in the cell membrane. It catalyses the reaction GTP = 3',5'-cyclic GMP + diphosphate. Functionally, guanylate cyclase involved in the production of the second messenger cGMP. Regulates chemotaxis responses toward salt ions in ASE sensory neurons. This Caenorhabditis briggsae protein is Receptor-type guanylate cyclase gcy-4.